The sequence spans 874 residues: Alanine--tRNA ligase (874 aa).

The Zn(2+) site is built by His562, His566, Cys664, and His668.

It belongs to the class-II aminoacyl-tRNA synthetase family. Zn(2+) is required as a cofactor.

It localises to the cytoplasm. It carries out the reaction tRNA(Ala) + L-alanine + ATP = L-alanyl-tRNA(Ala) + AMP + diphosphate. Its function is as follows. Catalyzes the attachment of alanine to tRNA(Ala) in a two-step reaction: alanine is first activated by ATP to form Ala-AMP and then transferred to the acceptor end of tRNA(Ala). Also edits incorrectly charged Ser-tRNA(Ala) and Gly-tRNA(Ala) via its editing domain. This Shewanella baltica (strain OS155 / ATCC BAA-1091) protein is Alanine--tRNA ligase.